The following is a 226-amino-acid chain: Enolase-phosphatase E1 (226 aa).

This sequence belongs to the HAD-like hydrolase superfamily. MasA/MtnC family. Monomer. Mg(2+) is required as a cofactor.

It catalyses the reaction 5-methylsulfanyl-2,3-dioxopentyl phosphate + H2O = 1,2-dihydroxy-5-(methylsulfanyl)pent-1-en-3-one + phosphate. Its pathway is amino-acid biosynthesis; L-methionine biosynthesis via salvage pathway; L-methionine from S-methyl-5-thio-alpha-D-ribose 1-phosphate: step 3/6. The protein operates within amino-acid biosynthesis; L-methionine biosynthesis via salvage pathway; L-methionine from S-methyl-5-thio-alpha-D-ribose 1-phosphate: step 4/6. Bifunctional enzyme that catalyzes the enolization of 2,3-diketo-5-methylthiopentyl-1-phosphate (DK-MTP-1-P) into the intermediate 2-hydroxy-3-keto-5-methylthiopentenyl-1-phosphate (HK-MTPenyl-1-P), which is then dephosphorylated to form the acireductone 1,2-dihydroxy-3-keto-5-methylthiopentene (DHK-MTPene). The chain is Enolase-phosphatase E1 from Alcanivorax borkumensis (strain ATCC 700651 / DSM 11573 / NCIMB 13689 / SK2).